A 124-amino-acid polypeptide reads, in one-letter code: Small ribosomal subunit protein uS12 (124 aa).

Residue Asp89 is modified to 3-methylthioaspartic acid.

It belongs to the universal ribosomal protein uS12 family. As to quaternary structure, part of the 30S ribosomal subunit. Contacts proteins S8 and S17. May interact with IF1 in the 30S initiation complex.

With S4 and S5 plays an important role in translational accuracy. Its function is as follows. Interacts with and stabilizes bases of the 16S rRNA that are involved in tRNA selection in the A site and with the mRNA backbone. Located at the interface of the 30S and 50S subunits, it traverses the body of the 30S subunit contacting proteins on the other side and probably holding the rRNA structure together. The combined cluster of proteins S8, S12 and S17 appears to hold together the shoulder and platform of the 30S subunit. This Shewanella amazonensis (strain ATCC BAA-1098 / SB2B) protein is Small ribosomal subunit protein uS12.